The primary structure comprises 359 residues: Probable dual-specificity RNA methyltransferase RlmN (359 aa).

The active-site Proton acceptor is Glu100. The Radical SAM core domain occupies Thr106–Asp340. Cys113 and Cys345 are oxidised to a cystine. Positions 120, 124, and 127 each coordinate [4Fe-4S] cluster. S-adenosyl-L-methionine is bound by residues Gly167–Glu168, Ser197, Ser226–His228, and Asn302. The active-site S-methylcysteine intermediate is the Cys345.

It belongs to the radical SAM superfamily. RlmN family. [4Fe-4S] cluster serves as cofactor.

The protein localises to the cytoplasm. It carries out the reaction adenosine(2503) in 23S rRNA + 2 reduced [2Fe-2S]-[ferredoxin] + 2 S-adenosyl-L-methionine = 2-methyladenosine(2503) in 23S rRNA + 5'-deoxyadenosine + L-methionine + 2 oxidized [2Fe-2S]-[ferredoxin] + S-adenosyl-L-homocysteine. The enzyme catalyses adenosine(37) in tRNA + 2 reduced [2Fe-2S]-[ferredoxin] + 2 S-adenosyl-L-methionine = 2-methyladenosine(37) in tRNA + 5'-deoxyadenosine + L-methionine + 2 oxidized [2Fe-2S]-[ferredoxin] + S-adenosyl-L-homocysteine. In terms of biological role, specifically methylates position 2 of adenine 2503 in 23S rRNA and position 2 of adenine 37 in tRNAs. This is Probable dual-specificity RNA methyltransferase RlmN from Prochlorococcus marinus (strain NATL1A).